A 280-amino-acid chain; its full sequence is Cyanocobalamin reductase / alkylcobalamin dealkylase (280 aa).

Substrate contacts are provided by residues Asp104, 115–118, 129–131, Cys149, and Ile160; these read ILAQ and YYQ. Phosphoserine occurs at positions 245, 247, 273, and 277. The interval 256–280 is disordered; it reads LSKKPQNPRRGWLSPTVSPPISPGP.

The protein belongs to the MMACHC family. In terms of assembly, monomer in the absence of bound substrate. Homodimer; dimerization is triggered by binding to FMN or adenosylcobalamin. Interacts with LMBRD1 and ABCD4; the interaction ensures the transport of cobalamin from the lysosome to the cytoplasm. Forms a multiprotein complex with MMADHC, MTR and MTRR; the interaction with MTR could modulate MMACHC-dependent processing of cobalamin. Heterodimer with MMADHC; the interaction might play a role in the regulation of the balance between AdoCbl and MeCbl synthesis. The cofactor is FAD. FMN serves as cofactor.

It localises to the cytoplasm. The protein resides in the cytosol. The catalysed reaction is 2 cob(II)alamin-[cyanocobalamin reductase] + 2 hydrogen cyanide + NADP(+) = 2 cyanocob(III)alamin + 2 apo-[cyanocobalamin reductase] + NADPH + H(+). It carries out the reaction apo-[alkylcobalamin reductase] + an R-cob(III)alamin + glutathione = cob(I)alamin-[alkylcobalamin reductase] + an S-substituted glutathione + H(+). The enzyme catalyses apo-[alkylcobalamin reductase] + methylcob(III)alamin + glutathione = S-methyl glutathione + cob(I)alamin-[alkylcobalamin reductase] + H(+). It catalyses the reaction apo-[alkylcobalamin reductase] + adenosylcob(III)alamin + glutathione = S-adenosylglutathione + cob(I)alamin-[alkylcobalamin reductase] + H(+). Its function is as follows. Cobalamin (vitamin B12) cytosolic chaperone that catalyzes the reductive decyanation of cyanocob(III)alamin (cyanocobalamin, CNCbl) to yield cob(II)alamin and cyanide, using FAD or FMN as cofactors and NADPH as cosubstrate. Cyanocobalamin constitutes the inactive form of vitamin B12 introduced from the diet, and is converted into the active cofactors methylcobalamin (MeCbl) involved in methionine biosynthesis, and 5'-deoxyadenosylcobalamin (AdoCbl) involved in the TCA cycle. Forms a complex with the lysosomal transporter ABCD4 and its chaperone LMBRD1, to transport cobalamin across the lysosomal membrane into the cytosol. The processing of cobalamin in the cytosol occurs in a multiprotein complex composed of at least MMACHC, MMADHC, MTRR (methionine synthase reductase) and MTR (methionine synthase) which may contribute to shuttle safely and efficiently cobalamin towards MTR in order to produce methionine. Also acts as a glutathione transferase by catalyzing the dealkylation of the alkylcob(III)alamins MeCbl and AdoCbl, using the thiolate of glutathione for nucleophilic displacement to generate cob(I)alamin and the corresponding glutathione thioether. The conversion of incoming MeCbl or AdoCbl into a common intermediate cob(I)alamin is necessary to meet the cellular needs for both cofactors. Cysteine and homocysteine cannot substitute for glutathione in this reaction. This is Cyanocobalamin reductase / alkylcobalamin dealkylase (MMACHC) from Bos taurus (Bovine).